A 273-amino-acid polypeptide reads, in one-letter code: tRNA (guanine-N(7)-)-methyltransferase (273 aa).

The disordered stretch occupies residues 1–32 (MSATAKKSAAQLQREEEEARKKLKRLSKQGGV). S-adenosyl-L-methionine-binding positions include Gly88, 111-112 (EI), 150-151 (NC), and Cys170. Asp173 is a catalytic residue. 248-250 (TEE) provides a ligand contact to S-adenosyl-L-methionine.

It belongs to the class I-like SAM-binding methyltransferase superfamily. TrmB family. In terms of assembly, forms a complex with trm82.

It localises to the nucleus. The catalysed reaction is guanosine(46) in tRNA + S-adenosyl-L-methionine = N(7)-methylguanosine(46) in tRNA + S-adenosyl-L-homocysteine. The protein operates within tRNA modification; N(7)-methylguanine-tRNA biosynthesis. Catalyzes the formation of N(7)-methylguanine at position 46 (m7G46) in tRNA. The protein is tRNA (guanine-N(7)-)-methyltransferase (trm8) of Schizosaccharomyces pombe (strain 972 / ATCC 24843) (Fission yeast).